We begin with the raw amino-acid sequence, 198 residues long: MIEFVYPHTHLVAGVDEVGRGPLVGAVVTAAVILDPARPIVGLNDSKKLSEKRRLALFDEIKEKALAWSLGRAEPEEIDELNILHATMLAMQRAVAGLKIVPEYVLIDGNRCPALPMRSLAVVKGDSRVAEISAASIIAKVTRDAEMAALDLSYPQYGFAQHKGYPTAFHLEKLSEHGPTEHHRRSFGPVKRALGLVC.

The region spanning 10 to 198 (HLVAGVDEVG…PVKRALGLVC (189 aa)) is the RNase H type-2 domain. Aspartate 16, glutamate 17, and aspartate 108 together coordinate a divalent metal cation.

It belongs to the RNase HII family. Mn(2+) is required as a cofactor. It depends on Mg(2+) as a cofactor.

The protein resides in the cytoplasm. The catalysed reaction is Endonucleolytic cleavage to 5'-phosphomonoester.. In terms of biological role, endonuclease that specifically degrades the RNA of RNA-DNA hybrids. In Enterobacter sp. (strain 638), this protein is Ribonuclease HII.